The following is a 62-amino-acid chain: Defensin BmKDfsin3 (62 aa).

The N-terminal stretch at 1–24 (MKTIVILFVLALVFCTLEMGMVEA) is a signal peptide. Cystine bridges form between C28–C49, C35–C57, and C39–C59.

It belongs to the invertebrate defensin family. Type 2 subfamily. As to expression, low expression in both venom and non-venom glands (hemolymph).

The protein localises to the secreted. Functionally, antibacterial peptide active against Gram-positive bacteria (including S.aureus ATCC25923 (MIC=2.5 uM), M.luteus AB93113 (MIC=2.5 uM), and the antibiotic-resistant S.epidermidis PRSE P1389 (MIC=1.25 uM)), but not against Gram-negative bacteria (including E.coli and P.aeruginosa). Also blocks the currents of Kv1.1/KCNA1 (57% inhibition), Kv1.2/KCNA2 (27.5% inhibition), Kv1.3/KCNA3 (IC(50)=23.4 nM, 84.3% inhibition), KCa3.1/KCNN4/IK (15% inhibition), KCa2.3/KCNN3/SK3 (87.5% inhibition) and Kv11.1/KCNH2/ERG1 (30.4% inhibition) channels (tested at 1 uM). It inhibits potassium channel current by interacting with the pore region. This Olivierus martensii (Manchurian scorpion) protein is Defensin BmKDfsin3.